A 238-amino-acid chain; its full sequence is Survival of motor neuron-related-splicing factor 30 (238 aa).

In terms of domain architecture, Tudor spans 72-132 (SWKVGDKCMA…KPVEEGRKAK (61 aa)). Residues 142 to 160 (KKEMIAQQREYKKKKALKK) carry the Nuclear localization signal motif. Serine 201 is subject to Phosphoserine. At lysine 219 the chain carries N6-acetyllysine.

The protein belongs to the SMN family. Associates with spliceosomes. Associates with U4/U5/U6 tri-snRNP and with U2 snRNP. Interacts (via Tudor domain) with SNRPD3 (via C-terminus); the interaction is direct. As to expression, detected at intermediate levels in skeletal muscle, and at low levels in heart and pancreas.

The protein localises to the nucleus speckle. It is found in the nucleus. It localises to the cajal body. Involved in spliceosome assembly. The protein is Survival of motor neuron-related-splicing factor 30 (SMNDC1) of Homo sapiens (Human).